The sequence spans 198 residues: Snake venom metalloproteinase neuwiedase (198 aa).

Residues 8–198 (RYIELVIVAD…QTFLTNHNPQ (191 aa)) form the Peptidase M12B domain. Positions 11 and 95 each coordinate Ca(2+). Residue H144 participates in Zn(2+) binding. Residue E145 is part of the active site. H148 and H154 together coordinate Zn(2+). Cystine bridges form between C159–C183 and C161–C166.

It belongs to the venom metalloproteinase (M12B) family. P-I subfamily. The cofactor is Zn(2+). In terms of tissue distribution, expressed by the venom gland.

Its subcellular location is the secreted. With respect to regulation, inhibited by EDTA, EGTA and 1,10-phenanthroline, partially inhibited by beta-mercaptoethanol and not inhibited by serine protease inhibitors (leupeptin and aprotinin). Also inhibited by an excess of zinc, mercury and magnesium ions. Extracts of the plant Casearia mariquitensis neutralizes the decrease of platelets and plasma fibrinogen induced by the protease. The same extracts also partially inhibit Bbeta chain cleavage, but not Aalpha chain cleavage. In terms of biological role, this metalloprotease hydrolyzes the Aalpha chain of fibrin and fibrinogen first followed by the Bbeta chain and shows no effect on the gamma chain. It is also able to degrade type I collagen, fibronectin, laminin and induces inflammatory reaction. It is devoid of hemorrhagic and thrombotic activities, except in lung where it induces pulmonary bleeding. It also induces a mild myotoxic reaction. It is not able to inhibit platelet aggregation, but it induces decrease of platelets and plasma fibrinogen. It contributes to local tissue damage by inducing edema, inflammatory infiltrate and mild myotoxicity, and by degrading extracellular matrix components. This chain is Snake venom metalloproteinase neuwiedase, found in Bothrops pauloensis (Neuwied's lancehead).